Here is a 169-residue protein sequence, read N- to C-terminus: Gamma-crystallin 2 (169 aa).

Beta/gamma crystallin 'Greek key' domains follow at residues 1-34 and 35-77; these read YEDR…KVDS and GCWM…KVIP. Residues 78–82 form a connecting peptide region; it reads QQKGP. Beta/gamma crystallin 'Greek key' domains follow at residues 83–123 and 124–166; these read HKMK…NVLE and GHWI…RRVL.

The protein belongs to the beta/gamma-crystallin family. As to quaternary structure, monomer.

Crystallins are the dominant structural components of the vertebrate eye lens. In Rana temporaria (European common frog), this protein is Gamma-crystallin 2.